The following is a 1007-amino-acid chain: Retinoblastoma-related protein (1007 aa).

The segment at 406–604 (TPVTTAMTTA…EKGSSMYNSL (199 aa)) is domain A. The interval 406 to 856 (TPVTTAMTTA…NEIFIPAVKP (451 aa)) is pocket. The segment at 605–725 (IVARAALSAE…PGREGETCAE (121 aa)) is spacer. Residues 644-665 (PVPSLQKRESSPGQNGDIRSPK) form a disordered region. A domain B region spans residues 726 to 856 (TGINIFFSKI…NEIFIPAVKP (131 aa)).

This sequence belongs to the retinoblastoma protein (RB) family.

The protein resides in the nucleus. Its function is as follows. Regulator of biological processes that recruits a histone deacetylase to control gene transcription. May play a role in the entry into mitosis, negatively regulating the cell proliferation. Formation of stable complexes with geminiviridae replication-associated proteins may create a cellular environment which favors viral DNA replication. The sequence is that of Retinoblastoma-related protein (RBR) from Vitis vinifera (Grape).